Reading from the N-terminus, the 827-residue chain is Disintegrin and metalloproteinase domain-containing protein 17 (827 aa).

The N-terminal stretch at 1–17 (MRQRLLFLTTLVPFVLA) is a signal peptide. A propeptide spanning residues 18–214 (PRPPEEPGSG…SEEFVRRVKR (197 aa)) is cleaved from the precursor. The N-linked (GlcNAc...) asparagine glycan is linked to asparagine 157. Positions 182–189 (KVCGYLNA) match the Cysteine switch motif. Position 184 (cysteine 184) interacts with Zn(2+). Residues 215-671 (RAEPNPLKNT…NTFGKFLADN (457 aa)) are Extracellular-facing. The Peptidase M12B domain maps to 223–474 (NTCKLLVVAD…KAQECFQERS (252 aa)). Disulfide bonds link cysteine 225-cysteine 333, cysteine 365-cysteine 469, and cysteine 423-cysteine 453. N-linked (GlcNAc...) asparagine glycosylation is present at asparagine 264. Residue histidine 405 coordinates Zn(2+). The active site involves glutamate 406. Residues histidine 409 and histidine 415 each contribute to the Zn(2+) site. Asparagine 452, asparagine 498, asparagine 539, and asparagine 551 each carry an N-linked (GlcNAc...) asparagine glycan. The region spanning 475–563 (NKVCGNSRVD…ECPPPGDAED (89 aa)) is the Disintegrin domain. Cystine bridges form between cysteine 534–cysteine 555, cysteine 573–cysteine 582, cysteine 578–cysteine 591, and cysteine 593–cysteine 600. The tract at residues 603 to 671 (CCRNLSGPCV…NTFGKFLADN (69 aa)) is crambin-like. Asparagine 606 carries N-linked (GlcNAc...) asparagine glycosylation. The chain crosses the membrane as a helical span at residues 672 to 692 (IVGSVLVFSLIFWIPFSILVH). Over 693 to 827 (CVDKKLDKQY…SRVDSKETEC (135 aa)) the chain is Cytoplasmic. Residues 731-738 (PAPQTPGR) carry the SH3-binding motif. Phosphothreonine; by MAPK14 is present on threonine 735. The residue at position 764 (threonine 764) is a Phosphothreonine. Positions 766 to 827 (QEDPSTDSHV…SRVDSKETEC (62 aa)) are disordered. At serine 770 the chain carries Phosphoserine. Basic and acidic residues-rich tracts occupy residues 771–784 (TDSH…EKDP), 794–810 (SFED…EKAA), and 818–827 (SRVDSKETEC). Residues serine 794 and serine 822 each carry the phosphoserine modification.

In terms of assembly, interacts with MAD2L1, MAPK14 and MUC1. Interacts with iRhom1/RHBDF1 and iRhom2/RHBDF2. Interacts with FRMD8 via its interaction with iRhom1/RHBDF1 and iRhom2/RHBDF2. Interacts with TSPAN8. The cofactor is Zn(2+). Post-translationally, the precursor is cleaved by a furin endopeptidase. Phosphorylated. Stimulation by growth factor or phorbol 12-myristate 13-acetate induces phosphorylation of Ser-822 but decreases phosphorylation of Ser-794. Phosphorylation at Thr-735 by MAPK14 is required for ADAM17-mediated ectodomain shedding.

The protein localises to the membrane. It carries out the reaction Narrow endopeptidase specificity. Cleaves Pro-Leu-Ala-Gln-Ala-|-Val-Arg-Ser-Ser-Ser in the membrane-bound, 26-kDa form of tumor necrosis factor alpha (TNFalpha). Similarly cleaves other membrane-anchored, cell-surface proteins to 'shed' the extracellular domains.. In terms of biological role, transmembrane metalloprotease which mediates the ectodomain shedding of a myriad of transmembrane proteins including adhesion proteins, growth factor precursors and cytokines important for inflammation and immunity. Cleaves the membrane-bound precursor of TNF-alpha to its mature soluble form. Responsible for the proteolytical release of soluble JAM3 from endothelial cells surface. Responsible for the proteolytic release of several other cell-surface proteins, including p75 TNF-receptor, interleukin 1 receptor type II, p55 TNF-receptor, transforming growth factor-alpha, L-selectin, growth hormone receptor, MUC1 and the amyloid precursor protein. Acts as an activator of Notch pathway by mediating cleavage of Notch, generating the membrane-associated intermediate fragment called Notch extracellular truncation (NEXT). Plays a role in the proteolytic processing of ACE2. Plays a role in hemostasis through shedding of GP1BA, the platelet glycoprotein Ib alpha chain. Mediates the proteolytic cleavage of LAG3, leading to release the secreted form of LAG3. Mediates the proteolytic cleavage of IL6R, leading to the release of secreted form of IL6R. Mediates the proteolytic cleavage and shedding of FCGR3A upon NK cell stimulation, a mechanism that allows for increased NK cell motility and detachment from opsonized target cells. Cleaves TREM2, resulting in shedding of the TREM2 ectodomain. This is Disintegrin and metalloproteinase domain-containing protein 17 (Adam17) from Rattus norvegicus (Rat).